Here is a 120-residue protein sequence, read N- to C-terminus: Jacalin-related lectin 39 (120 aa).

The region spanning 6–120 (SRDHADFVAH…KRTFDFGGFN (115 aa)) is the Jacalin-type lectin domain.

Belongs to the jacalin lectin family.

In Arabidopsis thaliana (Mouse-ear cress), this protein is Jacalin-related lectin 39 (JAL39).